We begin with the raw amino-acid sequence, 252 residues long: Imidazole glycerol phosphate synthase subunit HisF (252 aa).

Active-site residues include D11 and D130.

The protein belongs to the HisA/HisF family. In terms of assembly, heterodimer of HisH and HisF.

Its subcellular location is the cytoplasm. It carries out the reaction 5-[(5-phospho-1-deoxy-D-ribulos-1-ylimino)methylamino]-1-(5-phospho-beta-D-ribosyl)imidazole-4-carboxamide + L-glutamine = D-erythro-1-(imidazol-4-yl)glycerol 3-phosphate + 5-amino-1-(5-phospho-beta-D-ribosyl)imidazole-4-carboxamide + L-glutamate + H(+). It functions in the pathway amino-acid biosynthesis; L-histidine biosynthesis; L-histidine from 5-phospho-alpha-D-ribose 1-diphosphate: step 5/9. In terms of biological role, IGPS catalyzes the conversion of PRFAR and glutamine to IGP, AICAR and glutamate. The HisF subunit catalyzes the cyclization activity that produces IGP and AICAR from PRFAR using the ammonia provided by the HisH subunit. In Bacillus cereus (strain Q1), this protein is Imidazole glycerol phosphate synthase subunit HisF.